A 4749-amino-acid chain; its full sequence is Dynein heavy chain domain-containing protein 1 (4749 aa).

The segment covering 1 to 18 (MKPHSQTSPPSLPMPSTS) has biased composition (low complexity). 3 disordered regions span residues 1–27 (MKPHSQTSPPSLPMPSTSCRPGQTQKP), 275–308 (ESSDTEQAEGEPAGRKLQVASEAPEEKALKKKSS), and 2690–2785 (ESLA…KLQS). A compositionally biased stretch (acidic residues) spans 2696–2716 (CEEEEVEEEKVPEVESEEEIA). A compositionally biased stretch (polar residues) spans 2738–2749 (QATTGSFLSENS). Residues 3197–3224 (CQHQESLIENLVRQHDALKAQQEVFLEQ) adopt a coiled-coil conformation. The disordered stretch occupies residues 3568–3667 (PPKQNRSLEP…SLPSCLTVLS (100 aa)). Residues 3578–3593 (SPKESKEKFHVTKQDS) are compositionally biased toward basic and acidic residues. Residues 3594-3636 (GDNTEDELEDENNEEEDEANEQRKEQKAEENKIQGENEQEVQE) are a coiled coil. Acidic residues predominate over residues 3595-3612 (DNTEDELEDENNEEEDEA). A compositionally biased stretch (basic and acidic residues) spans 3613 to 3628 (NEQRKEQKAEENKIQG). Low complexity predominate over residues 3644 to 3655 (ESSGSHSSLPSE). Over residues 3656-3667 (TQSLPSCLTVLS) the composition is skewed to polar residues. Coiled coils occupy residues 3818 to 3838 (MVRTQAKICQLNAQMEELEDQ) and 4431 to 4451 (ERQLQQRLAQAKKRLVALQAL).

Belongs to the dynein heavy chain family. As to expression, expressed in spermatozoa (at protein level).

The protein localises to the cell projection. Its subcellular location is the cilium. It localises to the flagellum. In terms of biological role, essential for the normal function of sperm flagella axonemes. This is Dynein heavy chain domain-containing protein 1 (Dnhd1) from Mus musculus (Mouse).